Here is a 186-residue protein sequence, read N- to C-terminus: 3-hydroxyanthranilate 3,4-dioxygenase (186 aa).

Arg-44 lines the O2 pocket. Fe cation contacts are provided by His-48, Glu-54, and His-96. A substrate-binding site is contributed by Glu-54. 2 residues coordinate substrate: Arg-100 and Glu-110. The a divalent metal cation site is built by Cys-125, Cys-130, Cys-164, and Cys-167.

The protein belongs to the 3-HAO family. The cofactor is Fe(2+).

It localises to the cytoplasm. It carries out the reaction 3-hydroxyanthranilate + O2 = (2Z,4Z)-2-amino-3-carboxymuconate 6-semialdehyde. The protein operates within cofactor biosynthesis; NAD(+) biosynthesis; quinolinate from L-kynurenine: step 3/3. Its function is as follows. Catalyzes the oxidative ring opening of 3-hydroxyanthranilate to 2-amino-3-carboxymuconate semialdehyde, which spontaneously cyclizes to quinolinate. The chain is 3-hydroxyanthranilate 3,4-dioxygenase from Chaetomium globosum (strain ATCC 6205 / CBS 148.51 / DSM 1962 / NBRC 6347 / NRRL 1970) (Soil fungus).